Consider the following 477-residue polypeptide: Aspartyl/glutamyl-tRNA(Asn/Gln) amidotransferase subunit B (477 aa).

It belongs to the GatB/GatE family. GatB subfamily. Heterotrimer of A, B and C subunits.

It catalyses the reaction L-glutamyl-tRNA(Gln) + L-glutamine + ATP + H2O = L-glutaminyl-tRNA(Gln) + L-glutamate + ADP + phosphate + H(+). The catalysed reaction is L-aspartyl-tRNA(Asn) + L-glutamine + ATP + H2O = L-asparaginyl-tRNA(Asn) + L-glutamate + ADP + phosphate + 2 H(+). Functionally, allows the formation of correctly charged Asn-tRNA(Asn) or Gln-tRNA(Gln) through the transamidation of misacylated Asp-tRNA(Asn) or Glu-tRNA(Gln) in organisms which lack either or both of asparaginyl-tRNA or glutaminyl-tRNA synthetases. The reaction takes place in the presence of glutamine and ATP through an activated phospho-Asp-tRNA(Asn) or phospho-Glu-tRNA(Gln). The chain is Aspartyl/glutamyl-tRNA(Asn/Gln) amidotransferase subunit B from Legionella pneumophila (strain Lens).